The primary structure comprises 37 residues: Large ribosomal subunit protein bL36 (37 aa).

It belongs to the bacterial ribosomal protein bL36 family.

In Micrococcus luteus (strain ATCC 4698 / DSM 20030 / JCM 1464 / CCM 169 / CCUG 5858 / IAM 1056 / NBRC 3333 / NCIMB 9278 / NCTC 2665 / VKM Ac-2230) (Micrococcus lysodeikticus), this protein is Large ribosomal subunit protein bL36.